The primary structure comprises 431 residues: Adenylosuccinate lyase (431 aa).

Residues 4-5 (RY), 67-69 (RHD), and 93-94 (TS) contribute to the N(6)-(1,2-dicarboxyethyl)-AMP site. H141 (proton donor/acceptor) is an active-site residue. Q212 serves as a coordination point for N(6)-(1,2-dicarboxyethyl)-AMP. Catalysis depends on S262, which acts as the Proton donor/acceptor. N(6)-(1,2-dicarboxyethyl)-AMP-binding positions include S263, 268–270 (KRN), N276, and 307–311 (SAERI).

The protein belongs to the lyase 1 family. Adenylosuccinate lyase subfamily. In terms of assembly, homodimer and homotetramer. Residues from neighboring subunits contribute catalytic and substrate-binding residues to each active site.

The enzyme catalyses N(6)-(1,2-dicarboxyethyl)-AMP = fumarate + AMP. It catalyses the reaction (2S)-2-[5-amino-1-(5-phospho-beta-D-ribosyl)imidazole-4-carboxamido]succinate = 5-amino-1-(5-phospho-beta-D-ribosyl)imidazole-4-carboxamide + fumarate. It functions in the pathway purine metabolism; AMP biosynthesis via de novo pathway; AMP from IMP: step 2/2. The protein operates within purine metabolism; IMP biosynthesis via de novo pathway; 5-amino-1-(5-phospho-D-ribosyl)imidazole-4-carboxamide from 5-amino-1-(5-phospho-D-ribosyl)imidazole-4-carboxylate: step 2/2. Catalyzes two reactions in de novo purine nucleotide biosynthesis. Catalyzes the breakdown of 5-aminoimidazole- (N-succinylocarboxamide) ribotide (SAICAR or 2-[5-amino-1-(5-phospho-beta-D-ribosyl)imidazole-4-carboxamido]succinate) to 5-aminoimidazole-4-carboxamide ribotide (AICAR or 5-amino-1-(5-phospho-beta-D-ribosyl)imidazole-4-carboxamide) and fumarate, and of adenylosuccinate (ADS or N(6)-(1,2-dicarboxyethyl)-AMP) to adenosine monophosphate (AMP) and fumarate. This Staphylococcus epidermidis (strain ATCC 35984 / DSM 28319 / BCRC 17069 / CCUG 31568 / BM 3577 / RP62A) protein is Adenylosuccinate lyase (purB).